The following is a 427-amino-acid chain: Trigger factor (427 aa).

The PPIase FKBP-type domain occupies 163-248 (GDTVVIDFEG…VHEVKAKELP (86 aa)).

The protein belongs to the FKBP-type PPIase family. Tig subfamily.

It is found in the cytoplasm. It catalyses the reaction [protein]-peptidylproline (omega=180) = [protein]-peptidylproline (omega=0). Its function is as follows. Involved in protein export. Acts as a chaperone by maintaining the newly synthesized protein in an open conformation. Functions as a peptidyl-prolyl cis-trans isomerase. This chain is Trigger factor, found in Enterococcus faecalis (strain ATCC 700802 / V583).